The chain runs to 185 residues: Ribosome-recycling factor (185 aa).

Belongs to the RRF family.

It localises to the cytoplasm. In terms of biological role, responsible for the release of ribosomes from messenger RNA at the termination of protein biosynthesis. May increase the efficiency of translation by recycling ribosomes from one round of translation to another. The sequence is that of Ribosome-recycling factor from Salmonella arizonae (strain ATCC BAA-731 / CDC346-86 / RSK2980).